Consider the following 380-residue polypeptide: Cytochrome b (380 aa).

4 helical membrane passes run 34 to 54, 78 to 99, 114 to 134, and 179 to 199; these read FGSL…LLAM, WLIR…YLHI, WNTG…GYVL, and FFAL…IHLT. Residues His-84 and His-98 each coordinate heme b. 2 residues coordinate heme b: His-183 and His-197. His-202 lines the a ubiquinone pocket. 4 consecutive transmembrane segments (helical) span residues 227–247, 289–309, 321–341, and 348–368; these read LKDI…ALFS, LGGV…PFLH, ISQL…WVGS, and FIII…ILFP.

Belongs to the cytochrome b family. The cytochrome bc1 complex contains 11 subunits: 3 respiratory subunits (MT-CYB, CYC1 and UQCRFS1), 2 core proteins (UQCRC1 and UQCRC2) and 6 low-molecular weight proteins (UQCRH/QCR6, UQCRB/QCR7, UQCRQ/QCR8, UQCR10/QCR9, UQCR11/QCR10 and a cleavage product of UQCRFS1). This cytochrome bc1 complex then forms a dimer. It depends on heme b as a cofactor.

It is found in the mitochondrion inner membrane. Its function is as follows. Component of the ubiquinol-cytochrome c reductase complex (complex III or cytochrome b-c1 complex) that is part of the mitochondrial respiratory chain. The b-c1 complex mediates electron transfer from ubiquinol to cytochrome c. Contributes to the generation of a proton gradient across the mitochondrial membrane that is then used for ATP synthesis. The sequence is that of Cytochrome b (MT-CYB) from Puffinus opisthomelas (Black-vented shearwater).